Here is a 212-residue protein sequence, read N- to C-terminus: ATP-dependent dethiobiotin synthetase BioD (212 aa).

13-18 (GIGKTV) contributes to the ATP binding site. Thr17 is a Mg(2+) binding site. The active site involves Lys33. A substrate-binding site is contributed by Ser37. Glu100 lines the Mg(2+) pocket. ATP-binding positions include 100–103 (EGAG) and 184–186 (PRL).

Belongs to the dethiobiotin synthetase family. Homodimer. Mg(2+) is required as a cofactor.

The protein resides in the cytoplasm. It catalyses the reaction (7R,8S)-7,8-diammoniononanoate + CO2 + ATP = (4R,5S)-dethiobiotin + ADP + phosphate + 3 H(+). The protein operates within cofactor biosynthesis; biotin biosynthesis; biotin from 7,8-diaminononanoate: step 1/2. Functionally, catalyzes a mechanistically unusual reaction, the ATP-dependent insertion of CO2 between the N7 and N8 nitrogen atoms of 7,8-diaminopelargonic acid (DAPA, also called 7,8-diammoniononanoate) to form a ureido ring. In Rhodopseudomonas palustris (strain ATCC BAA-98 / CGA009), this protein is ATP-dependent dethiobiotin synthetase BioD.